The primary structure comprises 385 residues: 8-amino-7-oxononanoate synthase (385 aa).

Substrate is bound at residue Arg-21. Gly-108 to Phe-109 contacts pyridoxal 5'-phosphate. Residue His-133 coordinates substrate. The pyridoxal 5'-phosphate site is built by Ser-179, His-207, and Thr-233. Position 236 is an N6-(pyridoxal phosphate)lysine (Lys-236). Thr-352 provides a ligand contact to substrate.

The protein belongs to the class-II pyridoxal-phosphate-dependent aminotransferase family. BioF subfamily. As to quaternary structure, homodimer. Pyridoxal 5'-phosphate serves as cofactor.

It catalyses the reaction 6-carboxyhexanoyl-[ACP] + L-alanine + H(+) = (8S)-8-amino-7-oxononanoate + holo-[ACP] + CO2. It participates in cofactor biosynthesis; biotin biosynthesis. Its function is as follows. Catalyzes the decarboxylative condensation of pimeloyl-[acyl-carrier protein] and L-alanine to produce 8-amino-7-oxononanoate (AON), [acyl-carrier protein], and carbon dioxide. The protein is 8-amino-7-oxononanoate synthase of Salmonella paratyphi B (strain ATCC BAA-1250 / SPB7).